The sequence spans 152 residues: Transcriptional regulator MraZ (152 aa).

SpoVT-AbrB domains follow at residues A5–E52 and A81–T124.

This sequence belongs to the MraZ family. As to quaternary structure, dodecamer.

The protein resides in the cytoplasm. Its subcellular location is the nucleoid. Functionally, negatively regulates its own expression and that of the subsequent genes in the proximal part of the division and cell wall (dcw) gene cluster. Acts by binding directly to DNA. May also regulate the expression of genes outside the dcw cluster. This is Transcriptional regulator MraZ from Escherichia coli (strain K12).